The following is a 143-amino-acid chain: ATP synthase F(0) complex subunit C2, mitochondrial (143 aa).

The transit peptide at 1 to 68 (MYTCAKFVST…RSFQTSAISR (68 aa)) directs the protein to the mitochondrion. A helical transmembrane segment spans residues 84 to 104 (VGVAGSGAGIGTVFGSLIIGY). Lys-111 is subject to N6,N6,N6-trimethyllysine. The chain crosses the membrane as a helical span at residues 119-139 (ILGFALSEAMGLFCLMVAFLI).

This sequence belongs to the ATPase C chain family. As to quaternary structure, F-type ATPases have 2 components, CF(1) - the catalytic core - and CF(0) - the membrane proton channel. CF(1) has five subunits: alpha(3), beta(3), gamma(1), delta(1), epsilon(1). CF(0) has three main subunits: a, b and c. Interacts with DNAJC30; interaction is direct. Trimethylated by ATPSCKMT at Lys-111. Methylation is required for proper incorporation of the C subunit into the ATP synthase complex and mitochondrial respiration.

The protein localises to the mitochondrion membrane. Functionally, mitochondrial membrane ATP synthase (F(1)F(0) ATP synthase or Complex V) produces ATP from ADP in the presence of a proton gradient across the membrane which is generated by electron transport complexes of the respiratory chain. F-type ATPases consist of two structural domains, F(1) - containing the extramembraneous catalytic core and F(0) - containing the membrane proton channel, linked together by a central stalk and a peripheral stalk. During catalysis, ATP synthesis in the catalytic domain of F(1) is coupled via a rotary mechanism of the central stalk subunits to proton translocation. Part of the complex F(0) domain. A homomeric c-ring of probably 10 subunits is part of the complex rotary element. This is ATP synthase F(0) complex subunit C2, mitochondrial from Bos taurus (Bovine).